Here is a 221-residue protein sequence, read N- to C-terminus: Phosphoenolpyruvate guanylyltransferase (221 aa).

Residues Thr154, Gly169, and Ser172 each coordinate phosphoenolpyruvate.

The protein belongs to the CofC family.

It carries out the reaction phosphoenolpyruvate + GTP + H(+) = enolpyruvoyl-2-diphospho-5'-guanosine + diphosphate. It participates in cofactor biosynthesis; coenzyme F420 biosynthesis. Guanylyltransferase that catalyzes the activation of phosphoenolpyruvate (PEP) as enolpyruvoyl-2-diphospho-5'-guanosine, via the condensation of PEP with GTP. It is involved in the biosynthesis of coenzyme F420, a hydride carrier cofactor. This Mycolicibacterium smegmatis (strain ATCC 700084 / mc(2)155) (Mycobacterium smegmatis) protein is Phosphoenolpyruvate guanylyltransferase.